We begin with the raw amino-acid sequence, 202 residues long: CASP-like protein 2U7 (202 aa).

Residues 1–10 lie on the Cytoplasmic side of the membrane; the sequence is MLELYEKRRA. Residues 11–31 traverse the membrane as a helical segment; that stretch reads LLLLRLAAMFLSLAALLITVL. The Extracellular segment spans residues 32-64; it reads NREDGFFSINVFGSPQPILTKATADFTLVKGLK. A helical transmembrane segment spans residues 65-85; that stretch reads FFAGAMGIVAGYSFLQLAIAM. Residues 86-101 are Cytoplasmic-facing; the sequence is ASMFSGAPSILGGKRM. Residues 102-122 traverse the membrane as a helical segment; that stretch reads AWLCFVGDMTASHLCAAAAAV. At 123 to 148 the chain is on the extracellular side; sequence SAQLAYLGKRGAPMWSAVCTYFSHYC. The helical transmembrane segment at 149-169 threads the bilayer; the sequence is LVFGLAVIFAFLATLAALLVA. The Cytoplasmic segment spans residues 170 to 202; sequence SISSYHLFRLHGILQQQQQQRRQLQQEHVQDKP.

Belongs to the Casparian strip membrane proteins (CASP) family. In terms of assembly, homodimer and heterodimers.

The protein resides in the cell membrane. This Selaginella moellendorffii (Spikemoss) protein is CASP-like protein 2U7.